We begin with the raw amino-acid sequence, 256 residues long: Protein YIPF5 (256 aa).

The Cytoplasmic portion of the chain corresponds to 1–125; the sequence is MSNFDNFNTD…ADGSIMNETD (125 aa). Residues 126–146 form a helical membrane-spanning segment; sequence LAGPMVFCLAFGATLLLAGKI. Position 147 (glutamine 147) is a topological domain, lumenal. A helical transmembrane segment spans residues 148 to 168; the sequence is FGYVYGISAMGCLGMYCLLNL. Topologically, residues 169–172 are cytoplasmic; that stretch reads MSMT. The helical transmembrane segment at 173-193 threads the bilayer; that stretch reads GVSFGCVSSVLGYCLLPMIIL. Residues 194–195 lie on the Lumenal side of the membrane; sequence ST. A helical membrane pass occupies residues 196–216; it reads FAVIFSLQGILGIVLAALIIG. At 217–235 the chain is on the cytoplasmic side; sequence WCSFSASKIFISALAMDGQ. Residues 236–256 form a helical membrane-spanning segment; sequence QLLVAYPCALLYGVFALISVF.

It belongs to the YIP1 family.

The protein resides in the endoplasmic reticulum membrane. Its subcellular location is the golgi apparatus. It localises to the cis-Golgi network membrane. In terms of biological role, plays a role in transport between endoplasmic reticulum and Golgi. This is Protein YIPF5 (yipf5) from Xenopus laevis (African clawed frog).